A 195-amino-acid polypeptide reads, in one-letter code: HTH-type transcriptional regulator BetI (195 aa).

Residues 8-68 (SIRRRQLIDA…ATMRDITSQL (61 aa)) enclose the HTH tetR-type domain. The H-T-H motif DNA-binding region spans 31–50 (TIAQIARRAGVSTGIISHYF).

Its pathway is amine and polyamine biosynthesis; betaine biosynthesis via choline pathway [regulation]. Repressor involved in the biosynthesis of the osmoprotectant glycine betaine. It represses transcription of the choline transporter BetT and the genes of BetAB involved in the synthesis of glycine betaine. This is HTH-type transcriptional regulator BetI from Escherichia coli O17:K52:H18 (strain UMN026 / ExPEC).